The primary structure comprises 1165 residues: Peroxisomal ATPase PEX6 (1165 aa).

Belongs to the AAA ATPase family. Interacts with PEX1; forming the PEX1-PEX6 AAA ATPase complex, which is composed of a heterohexamer formed by a trimer of PEX1-PEX6 dimers.

The protein resides in the membrane. It catalyses the reaction ATP + H2O = ADP + phosphate + H(+). Functionally, component of the PEX1-PEX6 AAA ATPase complex involved in peroxisome biosynthesis. The complex acts as a protein dislocase complex that mediates the ATP-dependent extraction of the PEX5 receptor from peroxisomal membranes, an essential step for PEX5 recycling. Specifically recognizes PEX5 monoubiquitinated at 'Cys-6', and pulls it out of the peroxisome lumen through the PEX2-PEX10-PEX12 retrotranslocation channel. Extraction by the PEX1-PEX6 AAA ATPase complex is accompanied by unfolding of the TPR repeats and release of bound cargo from PEX5. This Komagataella pastoris (Yeast) protein is Peroxisomal ATPase PEX6.